Consider the following 333-residue polypeptide: 4-hydroxy-3-methylbut-2-enyl diphosphate reductase (333 aa).

Residue Cys-20 coordinates [4Fe-4S] cluster. His-49 and His-85 together coordinate (2E)-4-hydroxy-3-methylbut-2-enyl diphosphate. Dimethylallyl diphosphate is bound by residues His-49 and His-85. Positions 49 and 85 each coordinate isopentenyl diphosphate. Cys-107 contributes to the [4Fe-4S] cluster binding site. His-135 contributes to the (2E)-4-hydroxy-3-methylbut-2-enyl diphosphate binding site. Position 135 (His-135) interacts with dimethylallyl diphosphate. Isopentenyl diphosphate is bound at residue His-135. The active-site Proton donor is Glu-137. Thr-176 serves as a coordination point for (2E)-4-hydroxy-3-methylbut-2-enyl diphosphate. Residue Cys-206 coordinates [4Fe-4S] cluster. (2E)-4-hydroxy-3-methylbut-2-enyl diphosphate contacts are provided by Ser-234, Ser-235, Asn-236, and Ser-279. Ser-234, Ser-235, Asn-236, and Ser-279 together coordinate dimethylallyl diphosphate. Positions 234, 235, 236, and 279 each coordinate isopentenyl diphosphate.

It belongs to the IspH family. It depends on [4Fe-4S] cluster as a cofactor.

It catalyses the reaction isopentenyl diphosphate + 2 oxidized [2Fe-2S]-[ferredoxin] + H2O = (2E)-4-hydroxy-3-methylbut-2-enyl diphosphate + 2 reduced [2Fe-2S]-[ferredoxin] + 2 H(+). It carries out the reaction dimethylallyl diphosphate + 2 oxidized [2Fe-2S]-[ferredoxin] + H2O = (2E)-4-hydroxy-3-methylbut-2-enyl diphosphate + 2 reduced [2Fe-2S]-[ferredoxin] + 2 H(+). Its pathway is isoprenoid biosynthesis; dimethylallyl diphosphate biosynthesis; dimethylallyl diphosphate from (2E)-4-hydroxy-3-methylbutenyl diphosphate: step 1/1. It participates in isoprenoid biosynthesis; isopentenyl diphosphate biosynthesis via DXP pathway; isopentenyl diphosphate from 1-deoxy-D-xylulose 5-phosphate: step 6/6. In terms of biological role, catalyzes the conversion of 1-hydroxy-2-methyl-2-(E)-butenyl 4-diphosphate (HMBPP) into a mixture of isopentenyl diphosphate (IPP) and dimethylallyl diphosphate (DMAPP). Acts in the terminal step of the DOXP/MEP pathway for isoprenoid precursor biosynthesis. This is 4-hydroxy-3-methylbut-2-enyl diphosphate reductase from Rhizobium johnstonii (strain DSM 114642 / LMG 32736 / 3841) (Rhizobium leguminosarum bv. viciae).